A 62-amino-acid chain; its full sequence is Alpha-conotoxin-like Bn1.3 (62 aa).

An N-terminal signal peptide occupies residues 1–18 (MGMRMMFTVFLLVVLATA). A propeptide spanning residues 19-48 (VLPVTLDRASDGRNAAANAKTPRLIAPFIR) is cleaved from the precursor. Cystine bridges form between C51-C57 and C52-C61. Cysteine amide is present on C61.

The protein belongs to the conotoxin A superfamily. As to expression, expressed by the venom duct.

Its subcellular location is the secreted. Its function is as follows. Does not show activity on the acetylcholine receptors tested. The protein is Alpha-conotoxin-like Bn1.3 of Conus bandanus (Banded marble cone).